The primary structure comprises 276 residues: MKAQILREMKVLKAIEPEFEVQRRVAFIKTKLKEARSKALVLGISGGVDSSTAGRLCQLAVDSLNSEQANSDYQFIAVRLPYHIQKDEHEAQLACQFIQPSKLVTVNVHQGVDAVHGATLAAFVEAGLTLPDAAKVDFVKGNVKARMRMIAQYELAGLVGGLVVGTDHSAENITGFYTKWGDGACDLAPLFGLNKRQVRQLAAYLGAPESLVYKAPTADLEDNQPLLEDEVALGLTYAQIDDFLEGKEVDKSVETKLINIYKATQHKRQPIATIYD.

G43–S50 is a binding site for ATP. D49 contacts Mg(2+). Residue R146 coordinates deamido-NAD(+). T166 contributes to the ATP binding site. Position 171 (E171) interacts with Mg(2+). Deamido-NAD(+) contacts are provided by K179 and D186. ATP-binding residues include K195 and T217. H266–K267 serves as a coordination point for deamido-NAD(+).

Belongs to the NAD synthetase family. As to quaternary structure, homodimer.

It carries out the reaction deamido-NAD(+) + NH4(+) + ATP = AMP + diphosphate + NAD(+) + H(+). It participates in cofactor biosynthesis; NAD(+) biosynthesis; NAD(+) from deamido-NAD(+) (ammonia route): step 1/1. Catalyzes the ATP-dependent amidation of deamido-NAD to form NAD. Uses ammonia as a nitrogen source. The sequence is that of NH(3)-dependent NAD(+) synthetase from Shewanella putrefaciens (strain CN-32 / ATCC BAA-453).